We begin with the raw amino-acid sequence, 402 residues long: Putative epoxide hydrolase AFT8 (402 aa).

The protein belongs to the peptidase S33 family.

It participates in mycotoxin biosynthesis. In terms of biological role, putative epoxide hydrolase; part of the gene clusters that mediate the biosynthesis of the host-selective toxins (HSTs) AF-toxins responsible for Alternaria black spot of strawberry disease by the strawberry pathotype. AF-toxin I and III are valine derivatives of 2,3-dyhydroxy-isovaleric acid and 2-hydroxy-isovaleric acid respectively, while AF II is an isoleucine derivative of 2-hydroxy-valeric acid. These derivatives are bound to a 9,10-epoxy-8-hydroxy-9-methyl-decatrienoic acid (EDA) moiety. On cellular level, AF-toxins affect plasma membrane of susceptible cells and cause a sudden increase in loss of K(+) after a few minutes of toxin treatment. The aldo-keto reductase AFTS1 catalyzes the conversion of 2-keto-isovaleric acid (2-KIV) to 2-hydroxy-isovaleric acid (2-HIV) by reduction of its ketone to an alcohol. The acyl-CoA ligase AFT1, the hydrolase AFT2 and the enoyl-CoA hydratases AFT3 and AFT6, but also the polyketide synthase AFT9, the acyl-CoA dehydrogenase AFT10, the cytochrome P450 monooxygenase AFT11 and the oxidoreductase AFT12 are all involved in the biosynthesis of the AK-, AF- and ACT-toxin common EDA structural moiety. The exact function of each enzyme, and of additional enzymes identified within the AF-toxin clusters have still to be determined. This is Putative epoxide hydrolase AFT8 from Alternaria alternata (Alternaria rot fungus).